Here is a 1394-residue protein sequence, read N- to C-terminus: DNA-directed RNA polymerase subunit beta' (1394 aa).

Residues C71, C73, C86, and C89 each coordinate Zn(2+). 3 residues coordinate Mg(2+): D462, D464, and D466. Zn(2+) contacts are provided by C810, C883, C890, and C893.

It belongs to the RNA polymerase beta' chain family. In terms of assembly, the RNAP catalytic core consists of 2 alpha, 1 beta, 1 beta' and 1 omega subunit. When a sigma factor is associated with the core the holoenzyme is formed, which can initiate transcription. Mg(2+) serves as cofactor. It depends on Zn(2+) as a cofactor.

It catalyses the reaction RNA(n) + a ribonucleoside 5'-triphosphate = RNA(n+1) + diphosphate. Functionally, DNA-dependent RNA polymerase catalyzes the transcription of DNA into RNA using the four ribonucleoside triphosphates as substrates. The chain is DNA-directed RNA polymerase subunit beta' from Beijerinckia indica subsp. indica (strain ATCC 9039 / DSM 1715 / NCIMB 8712).